A 213-amino-acid chain; its full sequence is LexA repressor 2 (213 aa).

The H-T-H motif DNA-binding region spans 27 to 47 (QTEIARAFGFKGVRAAQYHLE). Catalysis depends on for autocatalytic cleavage activity residues serine 133 and lysine 170.

This sequence belongs to the peptidase S24 family. In terms of assembly, homodimer.

The catalysed reaction is Hydrolysis of Ala-|-Gly bond in repressor LexA.. In terms of biological role, represses a number of genes involved in the response to DNA damage (SOS response), including recA and lexA. In the presence of single-stranded DNA, RecA interacts with LexA causing an autocatalytic cleavage which disrupts the DNA-binding part of LexA, leading to derepression of the SOS regulon and eventually DNA repair. The protein is LexA repressor 2 of Xanthomonas oryzae pv. oryzae (strain KACC10331 / KXO85).